The chain runs to 248 residues: Pulmonary surfactant-associated protein A (248 aa).

The N-terminal stretch at 1 to 20 is a signal peptide; it reads MSLGSLAFTLFLTVVAGIKC. N21 carries N-linked (GlcNAc...) asparagine glycosylation. The 73-residue stretch at 28-100 folds into the Collagen-like domain; the sequence is GSPGIPGTPG…PGERGLPGFP (73 aa). Residues 28 to 100 form a disordered region; sequence GSPGIPGTPG…PGERGLPGFP (73 aa). A 4-hydroxyproline mark is found at P30, P33, P36, P42, P54, P57, P63, P67, P70, and P76. The segment covering 42-51 has biased composition (basic and acidic residues); that stretch reads PGRDGRDGIK. A compositionally biased stretch (pro residues) spans 54 to 65; it reads PGPPGPMGPPGG. The segment covering 69–82 has biased composition (low complexity); the sequence is LPGRDGLPGAPGAP. Basic and acidic residues predominate over residues 84–93; the sequence is EHGDKGEPGE. Residues 132 to 248 form the C-type lectin domain; that stretch reads LSVGDKVFST…LQYRLAICEF (117 aa). 2 disulfides stabilise this stretch: C155–C246 and C224–C238. N207 carries N-linked (GlcNAc...) asparagine glycosylation. Positions 215, 217, 234, and 235 each coordinate Ca(2+).

It belongs to the SFTPA family. In terms of assembly, oligomeric complex of 6 set of homotrimers.

Its subcellular location is the secreted. It localises to the extracellular space. The protein localises to the extracellular matrix. The protein resides in the surface film. In terms of biological role, in presence of calcium ions, it binds to surfactant phospholipids and contributes to lower the surface tension at the air-liquid interface in the alveoli of the mammalian lung and is essential for normal respiration. Enhances the expression of MYO18A/SP-R210 on alveolar macrophages. This Mus musculus (Mouse) protein is Pulmonary surfactant-associated protein A (Sftpa1).